The following is a 434-amino-acid chain: MRFPRIIISSDRSNSGKTLVTAGLIKVLSKRYKVRGYKVGPDFIDPMYHKIASGHPVINLDLWLMGESGVYSSLAKYGKHFDLGIIEGVMGLYDGLYEDYSTYKLSELTHTPLILVINCSNLSSTVGAIVKGLREYRNANVRGVIFNYIASEKHLDYCKKSIPENVEVLGYLPIDKSLSVPSRHLGLYTTEDFKNAKDVINATANLIEMNVDVDKIVEIAEEANELQESNEIEERNVVGKAYVAYDSAFSFYYDENIDILKKRYDVEFFSPLNNDAPADQPSFIYIGGGYPELHLEELENSTKTKDWIKRNVEKGVKLLAECGGFMFLSNEIINEKSYRMIGLYDIQIKAKDKLTIGYTELETEKDNLLSSKGESIRGHEFHVSKAVSVGDVNFAFKNKHGKGIWNGKDGVYVENSLGSYSHFHFSRTRRLLSF.

Residues 240-430 (KAYVAYDSAF…SHFHFSRTRR (191 aa)) form the GATase cobBQ-type domain. The active-site Nucleophile is Cys-322.

The protein belongs to the CobB/CbiA family. Mg(2+) is required as a cofactor.

The enzyme catalyses cob(II)yrinate + 2 L-glutamine + 2 ATP + 2 H2O = cob(II)yrinate a,c diamide + 2 L-glutamate + 2 ADP + 2 phosphate + 2 H(+). It participates in cofactor biosynthesis; adenosylcobalamin biosynthesis; cob(II)yrinate a,c-diamide from sirohydrochlorin (anaerobic route): step 10/10. Catalyzes the ATP-dependent amidation of the two carboxylate groups at positions a and c of cobyrinate, using either L-glutamine or ammonia as the nitrogen source. This is Cobyrinate a,c-diamide synthase from Sulfolobus acidocaldarius (strain ATCC 33909 / DSM 639 / JCM 8929 / NBRC 15157 / NCIMB 11770).